A 306-amino-acid polypeptide reads, in one-letter code: Ribonuclease Z (306 aa).

The Zn(2+) site is built by His-63, His-65, Asp-67, His-68, His-141, Asp-211, and His-269. The Proton acceptor role is filled by Asp-67.

Belongs to the RNase Z family. Homodimer. The cofactor is Zn(2+).

The catalysed reaction is Endonucleolytic cleavage of RNA, removing extra 3' nucleotides from tRNA precursor, generating 3' termini of tRNAs. A 3'-hydroxy group is left at the tRNA terminus and a 5'-phosphoryl group is left at the trailer molecule.. In terms of biological role, zinc phosphodiesterase, which displays some tRNA 3'-processing endonuclease activity. Probably involved in tRNA maturation, by removing a 3'-trailer from precursor tRNA. This Macrococcus caseolyticus (strain JCSC5402) (Macrococcoides caseolyticum) protein is Ribonuclease Z.